The primary structure comprises 2549 residues: Serine/threonine-protein kinase mTOR (2549 aa).

Met1 is subject to N-acetylmethionine. Positions 1–651 (MLGTGPATAT…HVVSQTAVQV (651 aa)) are interaction with NBN. HEAT repeat units follow at residues 16–53 (SSNV…MELR), 55–99 (MSQE…VEGG), 100–137 (NSTR…AMAG), 138–179 (DTFT…AISV), 180–220 (PTFF…LILT), 222–276 (QREP…RISS), 277–313 (MEGE…PRHI), 314–364 (TPFT…CCRD), 365–409 (LMEE…AFTD), 410–445 (TQYL…VAVR), 446–494 (SEFK…RAMG), 495–529 (PGIQ…RQIP), 530–563 (QLKK…GLAH), 564–596 (QLAS…EFEG), 597–636 (HSLT…SIHL), 637–683 (ISGH…DERF), 686–724 (HLAQ…MNPA), 727–766 (MPFL…NAPR), 769–811 (RPYM…VSGL), 814–853 (RKWV…STGY), 857–893 (PYRK…LLGA), 894–942 (LDPY…GNLP), 943–988 (LDEF…KCVQ), 989–1027 (FLPQ…KSHI), 1029–1068 (PYMD…GEFK), 1069–1105 (LYLP…LFGA), 1106–1144 (NLDD…RLTE), 1145–1188 (SLDF…GKKY), 1189–1225 (QIFI…LADE), 1226–1273 (EEDP…GAAR), 1274–1311 (RVSK…QAYN), and 1312–1345 (PMAR…ELAL). Ser567 bears the Phosphoserine mark. Thr1162 is subject to Phosphothreonine. An N6-acetyllysine modification is found at Lys1218. Ser1261 is subject to Phosphoserine. TPR repeat units lie at residues 1346–1382 (TSQD…GIVL), 1383–1408 (LGER…QKGP), 1409–1442 (TPAI…HFGE), 1443–1473 (LEIQ…NKDD), 1474–1507 (PELM…VNDE), 1508–1541 (TQAK…RDTH), 1542–1574 (DGAF…LDAE), 1575–1614 (LTAM…RREI), 1615–1649 (IRQI…PHED), 1650–1693 (MRTW…PTVH), 1694–1731 (PQVT…AQHA), 1732–1786 (IATE…DRSW), 1787–1846 (YKAW…STEG), 1898–1930 (NNLQ…VKAI), 1931–1970 (QIDT…YHPQ), and 1971–2005 (ALIY…SNTL). One can recognise an FAT domain in the interval 1382 to 1982 (LLGERAAKCR…IYPLTVASKS (601 aa)). Residues Lys1662, Lys1702, and Arg1749 each contribute to the 1D-myo-inositol hexakisphosphate site. A disordered region spans residues 1812-1867 (DEKKKLRHASGANITNATTTATTAASAAAATSTEGSNSESEAESNESSPTPSPLQK). Positions 1826–1860 (TNATTTATTAASAAAATSTEGSNSESEAESNESSP) are enriched in low complexity. The tract at residues 2012–2144 (VSEELIRVAI…DLELAVPGTY (133 aa)) is sufficient for interaction with the FKBP1A/rapamycin complex. Lys2066 participates in a covalent cross-link: Glycyl lysine isopeptide (Lys-Gly) (interchain with G-Cter in ubiquitin). The PI3K/PI4K catalytic domain maps to 2156-2469 (IAPSLQVITS…GVELGEPAHK (314 aa)). Residue Ser2159 is modified to Phosphoserine. The tract at residues 2162–2168 (VITSKQR) is G-loop. Thr2164 bears the Phosphothreonine mark. Residues Ser2165 and Gln2167 each coordinate ATP. Thr2173 is subject to Phosphothreonine; by PKB/AKT1. Leu2185, Lys2187, Glu2190, Tyr2225, Gly2238, Trp2239, Val2240, and Thr2245 together coordinate ATP. Residues 2258–2296 (KILLNIEHRIMLRMAPDYDHLTLMQKVEVFEHAVNNTAG) form an interaction with MLST8 region. The tract at residues 2335-2343 (GLGDRHPSN) is catalytic loop. Asn2343 lines the Mg(2+) pocket. Positions 2345 and 2356 each coordinate ATP. The interval 2355 to 2380 (HIDFGDCFEVAMTREKFPEKIPFRLT) is activation loop. Residue Asp2357 participates in Mg(2+) binding. Thr2446 is subject to Phosphothreonine; by RPS6KB1. A Phosphoserine; by RPS6KB1 modification is found at Ser2448. Ser2478 carries the phosphoserine modification. At Ser2481 the chain carries Phosphoserine; by autocatalysis. The region spanning 2517-2549 (DTLDVPTQVELLIKQATSHENLCQCYIGWCPFW) is the FATC domain.

This sequence belongs to the PI3/PI4-kinase family. Part of the mechanistic target of rapamycin complex 1 (mTORC1) which contains MTOR, MLST8 and RPTOR. The mTORC1 complex is a 1 Md obligate dimer of two stoichiometric heterotetramers with overall dimensions of 290 A x 210 A x 135 A. It has a rhomboid shape and a central cavity, the dimeric interfaces are formed by interlocking interactions between the two MTOR and the two RPTOR subunits. The MLST8 subunit forms distal foot-like protuberances, and contacts only one MTOR within the complex, while the small AKT1S1/PRAS40 localizes to the midsection of the central core, in close proximity to RPTOR. mTORC1 associates with AKT1S1/PRAS40, which inhibits its activity by blocking MTOR substrate-recruitment site. Component of the mechanistic target of rapamycin complex 2 (mTORC2), consisting in two heterotretramers composed of MTOR, MLST8, RICTOR and MAPKAP1/SIN1. Interacts with PLPP7 and PML. Interacts with PRR5 and RICTOR; the interaction is direct within the mTORC2 complex and interaction with RICTOR is enhanced by deubiquitination of RICTOR by USP9X. mTORC1 and mTORC2 associate with DEPTOR, which regulates their activity. Interacts with WAC; WAC positively regulates MTOR activity by promoting the assembly of the TTT complex composed of TELO2, TTI1 and TTI2 and the RUVBL complex composed of RUVBL1 and RUVBL2 into the TTT-RUVBL complex which leads to the dimerization of the mTORC1 complex and its subsequent activation. Interacts with UBQLN1. Interacts with TTI1 and TELO2. Interacts with CLIP1; phosphorylates and regulates CLIP1. Interacts with NBN. Interacts with HTR6. Interacts with BRAT1. Interacts with MEAK7 (via C-terminal domain); the interaction increases upon nutrient stimulation. Interacts with TM4SF5; the interaction is positively regulated by arginine and is negatively regulated by leucine. Interacts with GPR137B. Interacts with NCKAP1L. Interacts with TPCN1 and TPCN2; the interaction is required for TPCN1 and TPCN2 sensitivity to ATP. Interacts with ATP6V1A and with CRYAB, forming a ternary complex. Interacts with SLC38A7; this interaction mediates the recruitment of mTORC1 to the lysosome and its subsequent activation. Interacts with TSPAN8. In terms of processing, autophosphorylates when part of mTORC1 or mTORC2. Phosphorylation at Ser-1261, Ser-2159 and Thr-2164 promotes autophosphorylation. Phosphorylated at Ser-2448 by RPS6KB1. Phosphorylation in the kinase domain modulates the interactions of MTOR with RPTOR and AKT1S1/PRAS40 and leads to increased intrinsic mTORC1 kinase activity. Phosphorylation at Ser-2159 by TBK1 in response to growth factors and pathogen recognition receptors promotes mTORC1 activity. Phosphorylation at Ser-2159 by TBK1 in response to EGF growth factor promotes mTORC2 activity, leading to AKT1 phosphorylation and activation. Phosphorylation at Thr-2173 in the ATP-binding region by AKT1 strongly reduces kinase activity. Ubiquitinated at Lys-2066 by the SCF(FBXO22) complex via 'Lys-27'-linked ubiquitination prevents mTORC1 substrate recruitment.

Its subcellular location is the lysosome membrane. The protein localises to the endoplasmic reticulum membrane. It localises to the golgi apparatus membrane. It is found in the cell membrane. The protein resides in the mitochondrion outer membrane. Its subcellular location is the cytoplasm. The protein localises to the nucleus. It localises to the PML body. It is found in the microsome membrane. The protein resides in the cytoplasmic vesicle. Its subcellular location is the phagosome. The enzyme catalyses L-seryl-[protein] + ATP = O-phospho-L-seryl-[protein] + ADP + H(+). It catalyses the reaction L-threonyl-[protein] + ATP = O-phospho-L-threonyl-[protein] + ADP + H(+). It carries out the reaction L-tyrosyl-[protein] + ATP = O-phospho-L-tyrosyl-[protein] + ADP + H(+). With respect to regulation, the mTORC1 complex is activated in response to nutrients, growth factors or amino acids: activation requires relocalization of the mTORC1 complex to lysosomes that is mediated by the Ragulator complex, SLC38A9, and the Rag GTPases RagA/RRAGA, RagB/RRAGB, RagC/RRAGC and RagD/RRAGD. Activation of mTORC1 by growth factors such as insulin involves AKT1-mediated phosphorylation of TSC1-TSC2, which leads to the activation of the RHEB GTPase a potent activator of the protein kinase activity of mTORC1. Insulin-stimulated and amino acid-dependent phosphorylation at Ser-1261 promotes autophosphorylation and the activation of mTORC1. On the other hand, low cellular energy levels can inhibit mTORC1 through activation of PRKAA1 while hypoxia inhibits mTORC1 through a REDD1-dependent mechanism which may also require PRKAA1. The kinase activity of MTOR within the mTORC1 complex is positively regulated by MLST8. The kinase activity of MTOR is inhibited by DEPTOR and AKT1S1. The non-canonical mTORC1 complex is independent of the RHEB GTPase and specifically mediates phosphorylation of MiT/TFE factors TFEB and TFE3 but not other mTORC1 substrates: it is activated by FLCN, which activates Rag GTPases RagC/RRAGC and RagD/RRAGD. MTOR is the target of the immunosuppressive and anti-cancer drug rapamycin which acts in complex with FKBP1A/FKBP12, and specifically inhibits its kinase activity. mTORC2 is also activated by growth factors, but seems to be nutrient-insensitive. mTORC2 associates and is directly activated by ribosomes. mTORC2 may also be regulated by RHEB but in an indirect manner through the PI3K signaling pathway. Functionally, serine/threonine protein kinase which is a central regulator of cellular metabolism, growth and survival in response to hormones, growth factors, nutrients, energy and stress signals. MTOR directly or indirectly regulates the phosphorylation of at least 800 proteins. Functions as part of 2 structurally and functionally distinct signaling complexes mTORC1 and mTORC2 (mTOR complex 1 and 2). In response to nutrients, growth factors or amino acids, mTORC1 is recruited to the lysosome membrane and promotes protein, lipid and nucleotide synthesis by phosphorylating key regulators of mRNA translation and ribosome synthesis. This includes phosphorylation of EIF4EBP1 and release of its inhibition toward the elongation initiation factor 4E (eiF4E). Moreover, phosphorylates and activates RPS6KB1 and RPS6KB2 that promote protein synthesis by modulating the activity of their downstream targets including ribosomal protein S6, eukaryotic translation initiation factor EIF4B, and the inhibitor of translation initiation PDCD4. Stimulates the pyrimidine biosynthesis pathway, both by acute regulation through RPS6KB1-mediated phosphorylation of the biosynthetic enzyme CAD, and delayed regulation, through transcriptional enhancement of the pentose phosphate pathway which produces 5-phosphoribosyl-1-pyrophosphate (PRPP), an allosteric activator of CAD at a later step in synthesis, this function is dependent on the mTORC1 complex. Regulates ribosome synthesis by activating RNA polymerase III-dependent transcription through phosphorylation and inhibition of MAF1 an RNA polymerase III-repressor. Activates dormant ribosomes by mediating phosphorylation of SERBP1, leading to SERBP1 inactivation and reactivation of translation. In parallel to protein synthesis, also regulates lipid synthesis through SREBF1/SREBP1 and LPIN1. To maintain energy homeostasis mTORC1 may also regulate mitochondrial biogenesis through regulation of PPARGC1A. In the same time, mTORC1 inhibits catabolic pathways: negatively regulates autophagy through phosphorylation of ULK1. Under nutrient sufficiency, phosphorylates ULK1 at 'Ser-758', disrupting the interaction with AMPK and preventing activation of ULK1. Also prevents autophagy through phosphorylation of the autophagy inhibitor DAP. Also prevents autophagy by phosphorylating RUBCNL/Pacer under nutrient-rich conditions. Prevents autophagy by mediating phosphorylation of AMBRA1, thereby inhibiting AMBRA1 ability to mediate ubiquitination of ULK1 and interaction between AMBRA1 and PPP2CA. mTORC1 exerts a feedback control on upstream growth factor signaling that includes phosphorylation and activation of GRB10 a INSR-dependent signaling suppressor. Among other potential targets mTORC1 may phosphorylate CLIP1 and regulate microtubules. The mTORC1 complex is inhibited in response to starvation and amino acid depletion. The non-canonical mTORC1 complex, which acts independently of RHEB, specifically mediates phosphorylation of MiT/TFE factors TFEB and TFE3 in the presence of nutrients, promoting their cytosolic retention and inactivation. Upon starvation or lysosomal stress, inhibition of mTORC1 induces dephosphorylation and nuclear translocation of TFEB and TFE3, promoting their transcription factor activity. The mTORC1 complex regulates pyroptosis in macrophages by promoting GSDMD oligomerization. MTOR phosphorylates RPTOR which in turn inhibits mTORC1. As part of the mTORC2 complex, MTOR transduces signals from growth factors to pathways involved in proliferation, cytoskeletal organization, lipogenesis and anabolic output. In response to growth factors, mTORC2 phosphorylates and activates AGC protein kinase family members, including AKT (AKT1, AKT2 and AKT3), PKC (PRKCA, PRKCB and PRKCE) and SGK1. In contrast to mTORC1, mTORC2 is nutrient-insensitive. mTORC2 plays a critical role in AKT1 activation by mediating phosphorylation of different sites depending on the context, such as 'Thr-450', 'Ser-473', 'Ser-477' or 'Thr-479', facilitating the phosphorylation of the activation loop of AKT1 on 'Thr-308' by PDPK1/PDK1 which is a prerequisite for full activation. mTORC2 also regulates the phosphorylation of SGK1 at 'Ser-422'. mTORC2 may regulate the actin cytoskeleton, through phosphorylation of PRKCA, PXN and activation of the Rho-type guanine nucleotide exchange factors RHOA and RAC1A or RAC1B. The mTORC2 complex also phosphorylates various proteins involved in insulin signaling, such as FBXW8 and IGF2BP1. May also regulate insulin signaling by acting as a tyrosine protein kinase that catalyzes phosphorylation of IGF1R and INSR. Regulates osteoclastogenesis by adjusting the expression of CEBPB isoforms. Plays an important regulatory role in the circadian clock function; regulates period length and rhythm amplitude of the suprachiasmatic nucleus (SCN) and liver clocks. In Rattus norvegicus (Rat), this protein is Serine/threonine-protein kinase mTOR.